Reading from the N-terminus, the 320-residue chain is UPF0053 protein in cps region (320 aa).

The helical transmembrane segment at 4 to 24 (CLSFLLMIGFSLIAEGFSFII) threads the bilayer. CBS domains follow at residues 121–183 (MTSR…PLDL) and 186–244 (LVRQ…PNEV).

The protein belongs to the UPF0053 family.

It localises to the cell membrane. The polypeptide is UPF0053 protein in cps region (Klebsiella pneumoniae).